The primary structure comprises 493 residues: Probable cytosol aminopeptidase (493 aa).

Residues lysine 258 and aspartate 263 each contribute to the Mn(2+) site. Lysine 270 is an active-site residue. 3 residues coordinate Mn(2+): aspartate 281, aspartate 340, and glutamate 342. Arginine 344 is a catalytic residue.

Belongs to the peptidase M17 family. It depends on Mn(2+) as a cofactor.

The protein localises to the cytoplasm. It carries out the reaction Release of an N-terminal amino acid, Xaa-|-Yaa-, in which Xaa is preferably Leu, but may be other amino acids including Pro although not Arg or Lys, and Yaa may be Pro. Amino acid amides and methyl esters are also readily hydrolyzed, but rates on arylamides are exceedingly low.. It catalyses the reaction Release of an N-terminal amino acid, preferentially leucine, but not glutamic or aspartic acids.. In terms of biological role, presumably involved in the processing and regular turnover of intracellular proteins. Catalyzes the removal of unsubstituted N-terminal amino acids from various peptides. This is Probable cytosol aminopeptidase from Caulobacter vibrioides (strain ATCC 19089 / CIP 103742 / CB 15) (Caulobacter crescentus).